An 83-amino-acid chain; its full sequence is Cell division topological specificity factor (83 aa).

This sequence belongs to the MinE family.

Functionally, prevents the cell division inhibition by proteins MinC and MinD at internal division sites while permitting inhibition at polar sites. This ensures cell division at the proper site by restricting the formation of a division septum at the midpoint of the long axis of the cell. This is Cell division topological specificity factor from Alcanivorax borkumensis (strain ATCC 700651 / DSM 11573 / NCIMB 13689 / SK2).